We begin with the raw amino-acid sequence, 348 residues long: Fructose-1,6-bisphosphatase (348 aa).

The Pro/N-degron motif lies at 2–5 (PTLV). S12 carries the phosphoserine modification. AMP is bound by residues 27 to 31 (IIEHQ) and 38 to 42 (TGDFT). Mg(2+) contacts are provided by D79 and E108. Residue 122-123 (SY) participates in AMP binding. Mg(2+) is bound by residues D128, I130, and D131. Substrate is bound at residue 131-134 (DGSS). Residue R150 participates in AMP binding. Residues 222–225 (NEGN), 255–260 (RYVGSM), Y276, and 286–288 (KLR) contribute to the substrate site. E292 is a Mg(2+) binding site.

The protein belongs to the FBPase class 1 family. As to quaternary structure, homotetramer. The cofactor is Mg(2+). In terms of processing, ubiquitinated. Targeted for proteasomal degradation when cells are shifted to glucose-containing growth medium.

It catalyses the reaction beta-D-fructose 1,6-bisphosphate + H2O = beta-D-fructose 6-phosphate + phosphate. It functions in the pathway carbohydrate biosynthesis; gluconeogenesis. Subject to complex allosteric regulation. The enzyme can assume an active R-state, or an inactive T-state. Intermediate conformations may exist. AMP acts as allosteric inhibitor. AMP binding affects the turnover of bound substrate and not the affinity for substrate. The polypeptide is Fructose-1,6-bisphosphatase (FBP1) (Saccharomyces cerevisiae (strain ATCC 204508 / S288c) (Baker's yeast)).